A 59-amino-acid polypeptide reads, in one-letter code: Large ribosomal subunit protein bL32 (59 aa).

Residues 1-34 (MAVQKSKVTRSRRGQRRSHDALTGPTLSVDKTTG) are disordered. Over residues 7–16 (KVTRSRRGQR) the composition is skewed to basic residues.

This sequence belongs to the bacterial ribosomal protein bL32 family.

This Marinomonas sp. (strain MWYL1) protein is Large ribosomal subunit protein bL32.